The chain runs to 239 residues: Small ribosomal subunit protein uS3 (239 aa).

In terms of domain architecture, KH type-2 spans I38–K106.

This sequence belongs to the universal ribosomal protein uS3 family. In terms of assembly, part of the 30S ribosomal subunit. Forms a tight complex with proteins S10 and S14.

Functionally, binds the lower part of the 30S subunit head. Binds mRNA in the 70S ribosome, positioning it for translation. In Elusimicrobium minutum (strain Pei191), this protein is Small ribosomal subunit protein uS3.